We begin with the raw amino-acid sequence, 444 residues long: Methylenetetrahydrofolate--tRNA-(uracil-5-)-methyltransferase TrmFO (444 aa).

FAD is bound at residue 10–15; the sequence is GAGLAG.

Belongs to the MnmG family. TrmFO subfamily. FAD is required as a cofactor.

It localises to the cytoplasm. It carries out the reaction uridine(54) in tRNA + (6R)-5,10-methylene-5,6,7,8-tetrahydrofolate + NADH + H(+) = 5-methyluridine(54) in tRNA + (6S)-5,6,7,8-tetrahydrofolate + NAD(+). The enzyme catalyses uridine(54) in tRNA + (6R)-5,10-methylene-5,6,7,8-tetrahydrofolate + NADPH + H(+) = 5-methyluridine(54) in tRNA + (6S)-5,6,7,8-tetrahydrofolate + NADP(+). Its function is as follows. Catalyzes the folate-dependent formation of 5-methyl-uridine at position 54 (M-5-U54) in all tRNAs. This Streptococcus pneumoniae (strain 70585) protein is Methylenetetrahydrofolate--tRNA-(uracil-5-)-methyltransferase TrmFO.